Here is a 367-residue protein sequence, read N- to C-terminus: MIETIHVNLNNYSYNIYIGEYIFNNMFISSIFLKNKNNVLITNKKIEKKILKNKNQYFYKILNKIHYFSINDGENYKNLYEVEKIISFLLNNLYGRDLNLIALGGGVIGDITGFVASIFQRGVNFFQIPTTLLSQVDASIGGKTGVNHILGKNMIGSFWQPKGVFIDIKFLSTLPKKELLSGIAEIIKYAIVFDKIFFIWLENNLFKVLNLQKKELLYCIKKCCELKVKIIENDEKEIGNRVFLNLGHSFAHAIETFTGYGKWLHGNAVSVGIIMSSYLSFYLKYLKKSELLNIINIFNNIGLPIIGPSTMLPLDYLKLMMRDKKVINKNLRLVIPVSIGKVKLISSIKENILLDSITACQERRFFS.

Residues 72 to 77, 106 to 110, 130 to 131, Lys-143, Lys-152, and 170 to 173 contribute to the NAD(+) site; these read DGENYK, GVIGD, TT, and FLST. Residues Glu-185, His-248, and His-265 each coordinate Zn(2+).

Belongs to the sugar phosphate cyclases superfamily. Dehydroquinate synthase family. Co(2+) is required as a cofactor. Requires Zn(2+) as cofactor. The cofactor is NAD(+).

Its subcellular location is the cytoplasm. It carries out the reaction 7-phospho-2-dehydro-3-deoxy-D-arabino-heptonate = 3-dehydroquinate + phosphate. The protein operates within metabolic intermediate biosynthesis; chorismate biosynthesis; chorismate from D-erythrose 4-phosphate and phosphoenolpyruvate: step 2/7. Functionally, catalyzes the conversion of 3-deoxy-D-arabino-heptulosonate 7-phosphate (DAHP) to dehydroquinate (DHQ). This is 3-dehydroquinate synthase from Buchnera aphidicola subsp. Cinara cedri (strain Cc).